The primary structure comprises 258 residues: 5'-nucleotidase SurE (258 aa).

A divalent metal cation contacts are provided by Asp-8, Asp-9, Ser-40, and Asn-93.

The protein belongs to the SurE nucleotidase family. A divalent metal cation is required as a cofactor.

It localises to the cytoplasm. It catalyses the reaction a ribonucleoside 5'-phosphate + H2O = a ribonucleoside + phosphate. Nucleotidase that shows phosphatase activity on nucleoside 5'-monophosphates. The protein is 5'-nucleotidase SurE of Afipia carboxidovorans (strain ATCC 49405 / DSM 1227 / KCTC 32145 / OM5) (Oligotropha carboxidovorans).